We begin with the raw amino-acid sequence, 763 residues long: MQRAGSSGGRGECDISGAGRLGLEEAARLSCAVHTSPGGGRRPGQAAGMSAKERPKGKVIKDSVTLLPCFYFVELPILASSVVSLYFLELTDVFKPVHSGFSCYDRSLSMPYIEPTQEAIPFLMLLSLAFAGPAITIMVGEGILYCCLSKRRNGVGLEPNINAGGCNFNSFLRRAVRFVGVHVFGLCSTALITDIIQLSTGYQAPYFLTVCKPNYTSLNVSCKENSYIVEDICSGSDLTVINSGRKSFPSQHATLAAFAAVYVSMYFNSTLTDSSKLLKPLLVFTFIICGIICGLTRITQYKNHPVDVYCGFLIGGGIALYLGLYAVGNFLPSDESMFQHRDALRSLTDLNQDPNRLLSAKNGSSSDGIAHTEGILNRNHRDASSLTNLKRANADVEIITPRSPMGKENMVTFSNTLPRANTPSVEDPVRRNASIHASMDSARSKQLLTQWKNKNESRKLSLQVIEPEPGQSPPRSIEMRSSSEPSRVGVNGDHHGPGNQYLKIQPGAVPGCNNSMPGGPRVSIQSRPGSSQLVHIPEETQENISTSPKSSSARAKWLKAAEKTVACNRSNSQPRIMQVIAMSKQQGVLQSSPKNTEGSTVSCTGSIRYKTLTDHEPSGIVRVEAHPENNRPIIQIPSTEGEGSGSWKWKAPEKGSLRQTYELNDLNRDSESCESLKDSFGSGDRKRSNIDSNEHHHHGITTIRVTPVEGSEIGSETLSISSSRDSTLRRKGNIILIPERSNSPENTRNIFYKGTSPTRAYKD.

Positions 33–54 (VHTSPGGGRRPGQAAGMSAKER) are disordered. Serine 36 is modified (phosphoserine). The next 3 helical transmembrane spans lie at 67–87 (LPCF…SLYF), 119–139 (AIPF…TIMV), and 178–198 (FVGV…IIQL). N-linked (GlcNAc...) asparagine glycosylation is found at asparagine 214 and asparagine 219. The chain crosses the membrane as a helical span at residues 247–267 (SFPSQHATLAAFAAVYVSMYF). N-linked (GlcNAc...) asparagine glycosylation occurs at asparagine 268. Transmembrane regions (helical) follow at residues 276-296 (KLLK…CGLT) and 308-328 (VYCG…YAVG). Serine 346 is subject to Phosphoserine. Asparagine 362 carries an N-linked (GlcNAc...) asparagine glycan. The residue at position 385 (serine 385) is a Phosphoserine. An N-linked (GlcNAc...) asparagine glycan is attached at asparagine 432. Position 438 is a phosphoserine (serine 438). Residue asparagine 455 is glycosylated (N-linked (GlcNAc...) asparagine). The tract at residues 458 to 529 (RKLSLQVIEP…PRVSIQSRPG (72 aa)) is disordered. 2 positions are modified to phosphoserine: serine 461 and serine 472. Asparagine 513, asparagine 543, and asparagine 568 each carry an N-linked (GlcNAc...) asparagine glycan. The residue at position 606 (serine 606) is a Phosphoserine. Basic and acidic residues predominate over residues 669–694 (DSESCESLKDSFGSGDRKRSNIDSNE). 2 disordered regions span residues 669–698 (DSES…HHHH) and 739–763 (ERSN…AYKD). The span at 740–749 (RSNSPENTRN) shows a compositional bias: polar residues.

The protein belongs to the PA-phosphatase related phosphoesterase family. Post-translationally, O-glycosylated. Probably at Ser-346. As to expression, expressed by glutamatergic neurons (at protein level).

It localises to the postsynaptic density membrane. Its function is as follows. Postsynaptic density membrane protein that indirectly regulates glutamatergic synaptic transmission through lysophosphatidic acid (LPA)-mediated signaling pathways. Binds lysophosphatidic acid (LPA) and mediates its internalization into cells. Could act as receptor or a transporter of this lipid at the post-synaptic membrane. Modulates lysophosphatidic acid (LPA) activity in neuron axonal outgrowth during development by attenuating phospholipid-induced axon collapse. The polypeptide is Phospholipid phosphatase-related protein type 4 (Homo sapiens (Human)).